A 186-amino-acid chain; its full sequence is Ribosome-recycling factor (186 aa).

This sequence belongs to the RRF family.

It is found in the cytoplasm. Its function is as follows. Responsible for the release of ribosomes from messenger RNA at the termination of protein biosynthesis. May increase the efficiency of translation by recycling ribosomes from one round of translation to another. The chain is Ribosome-recycling factor from Porphyromonas gingivalis (strain ATCC BAA-308 / W83).